Reading from the N-terminus, the 430-residue chain is Probable beta-1,3-galactosyl-O-glycosyl-glycoprotein beta-1,6-N-acetylglucosaminyltransferase 7 (430 aa).

The Cytoplasmic segment spans residues 1–8; that stretch reads MSQLRATK. The helical; Signal-anchor for type II membrane protein transmembrane segment at 9–25 threads the bilayer; the sequence is SGLVVRAVICIFIFLYL. The Extracellular segment spans residues 26–430; the sequence is RNPTPAESEE…QSHFNMRLNR (405 aa). 4 cysteine pairs are disulfide-bonded: Cys-53–Cys-205, Cys-139–Cys-354, Cys-160–Cys-187, and Cys-363–Cys-395. Asn-87 is a glycosylation site (N-linked (GlcNAc...) asparagine). An N-linked (GlcNAc...) asparagine glycan is attached at Asn-272.

The protein belongs to the glycosyltransferase 14 family.

It localises to the golgi apparatus membrane. The protein operates within protein modification; protein glycosylation. In terms of biological role, probable glycosyltransferase. This Homo sapiens (Human) protein is Probable beta-1,3-galactosyl-O-glycosyl-glycoprotein beta-1,6-N-acetylglucosaminyltransferase 7.